The following is a 425-amino-acid chain: Serine--tRNA ligase (425 aa).

230–232 (TAE) provides a ligand contact to L-serine. Position 261–263 (261–263 (RAE)) interacts with ATP. Glutamate 284 is an L-serine binding site. 348-351 (EISS) serves as a coordination point for ATP. Serine 384 serves as a coordination point for L-serine.

The protein belongs to the class-II aminoacyl-tRNA synthetase family. Type-1 seryl-tRNA synthetase subfamily. Homodimer. The tRNA molecule binds across the dimer.

It localises to the cytoplasm. The catalysed reaction is tRNA(Ser) + L-serine + ATP = L-seryl-tRNA(Ser) + AMP + diphosphate + H(+). The enzyme catalyses tRNA(Sec) + L-serine + ATP = L-seryl-tRNA(Sec) + AMP + diphosphate + H(+). The protein operates within aminoacyl-tRNA biosynthesis; selenocysteinyl-tRNA(Sec) biosynthesis; L-seryl-tRNA(Sec) from L-serine and tRNA(Sec): step 1/1. Functionally, catalyzes the attachment of serine to tRNA(Ser). Is also able to aminoacylate tRNA(Sec) with serine, to form the misacylated tRNA L-seryl-tRNA(Sec), which will be further converted into selenocysteinyl-tRNA(Sec). The sequence is that of Serine--tRNA ligase from Desulforudis audaxviator (strain MP104C).